Here is a 503-residue protein sequence, read N- to C-terminus: ESX-5 secretion system protein EccD5 (503 aa).

The next 11 helical transmembrane spans lie at 137 to 157, 169 to 189, 200 to 220, 224 to 244, 250 to 270, 272 to 292, 359 to 379, 382 to 402, 413 to 433, 439 to 459, and 480 to 500; these read IVAV…ATGV, LTTI…MLLL, VADI…AAAP, VGSP…ALAL, RLGI…AALA, MVAA…CVVA, FLSG…TSLC, HTGQ…FLLL, SITL…RYAL, LAVS…MAAA, and YLCL…YAAI.

This sequence belongs to the EccD/Snm4 family. In terms of assembly, part of the ESX-5 / type VII secretion system (T7SS), which is composed of cytosolic and membrane components. The ESX-5 membrane complex is composed of EccB5, EccC5, EccD5 and EccE5.

The protein resides in the cell inner membrane. In terms of biological role, part of the ESX-5 specialized secretion system, which is responsible for the secretion of EsxN and a number of PE_PGRS and PPE proteins, including PPE41. In Mycobacterium tuberculosis (strain CDC 1551 / Oshkosh), this protein is ESX-5 secretion system protein EccD5.